The following is a 74-amino-acid chain: Large ribosomal subunit protein uL29 (74 aa).

Belongs to the universal ribosomal protein uL29 family.

The protein is Large ribosomal subunit protein uL29 (rpmC) of Streptomyces coelicolor (strain ATCC BAA-471 / A3(2) / M145).